A 480-amino-acid polypeptide reads, in one-letter code: Aspartyl/glutamyl-tRNA(Asn/Gln) amidotransferase subunit B (480 aa).

The protein belongs to the GatB/GatE family. GatB subfamily. Heterotrimer of A, B and C subunits.

It catalyses the reaction L-glutamyl-tRNA(Gln) + L-glutamine + ATP + H2O = L-glutaminyl-tRNA(Gln) + L-glutamate + ADP + phosphate + H(+). It carries out the reaction L-aspartyl-tRNA(Asn) + L-glutamine + ATP + H2O = L-asparaginyl-tRNA(Asn) + L-glutamate + ADP + phosphate + 2 H(+). Its function is as follows. Allows the formation of correctly charged Asn-tRNA(Asn) or Gln-tRNA(Gln) through the transamidation of misacylated Asp-tRNA(Asn) or Glu-tRNA(Gln) in organisms which lack either or both of asparaginyl-tRNA or glutaminyl-tRNA synthetases. The reaction takes place in the presence of glutamine and ATP through an activated phospho-Asp-tRNA(Asn) or phospho-Glu-tRNA(Gln). The polypeptide is Aspartyl/glutamyl-tRNA(Asn/Gln) amidotransferase subunit B (Streptococcus agalactiae serotype Ia (strain ATCC 27591 / A909 / CDC SS700)).